A 369-amino-acid polypeptide reads, in one-letter code: Septin-5 (369 aa).

Residue T13 is modified to Phosphothreonine. In terms of domain architecture, Septin-type G spans K41–Q314. The tract at residues G51–S58 is G1 motif. GTP is bound by residues G51 to S58, T85, and G111. Residues D108–G111 are G3 motif. Position 168 is an omega-N-methylarginine (R168). Positions A189 to D192 are G4 motif. Position 190-198 (K190–E198) interacts with GTP. S225 is subject to Phosphoserine. G248 and R263 together coordinate GTP. Residue S327 is modified to Phosphoserine. T336 is subject to Phosphothreonine. Positions D338–Q369 form a coiled coil.

Belongs to the TRAFAC class TrmE-Era-EngA-EngB-Septin-like GTPase superfamily. Septin GTPase family. In terms of assembly, septins polymerize into heterooligomeric protein complexes that form filaments, and can associate with cellular membranes, actin filaments and microtubules. GTPase activity is required for filament formation. Interacts with SEPTIN2 and SEPTIN5. In platelets, associated with a complex containing STX4. Interacts with PRKN; this interaction leads to SEPTIN5 ubiquitination and degradation. Interacts with DYRK1A. Interacts with STX1A; in the cerebellar cortex. In terms of processing, phosphorylated by DYRK1A. In platelets, phosphorylated in response to thrombin, phorbol-12-myristate-13-acetate and collagen. As to expression, expressed at high levels in the CNS, as well as in heart and platelets (at protein level).

It is found in the cytoplasm. The protein resides in the cytoskeleton. In terms of biological role, filament-forming cytoskeletal GTPase. May play a role in cytokinesis (Potential). May play a role in platelet secretion. The protein is Septin-5 of Homo sapiens (Human).